The following is a 108-amino-acid chain: uncharacterized protein (108 aa).

Positions 1–10 (MSGISLTPVK) are enriched in polar residues. Disordered stretches follow at residues 1-63 (MSGI…RPPR) and 83-108 (VLSP…PRTQ). The segment covering 33–62 (YVDRARPSADAKEHCAASDPEEWHSGDRPP) has biased composition (basic and acidic residues).

This is an uncharacterized protein from Gallid herpesvirus 2 (strain Chicken/Md5/ATCC VR-987) (GaHV-2).